The chain runs to 292 residues: RNA 5'-monophosphate methyltransferase (292 aa).

Positions 1 to 21 (MAVPTELDGGSVKETAAEEES) are disordered. S-adenosyl-L-methionine-binding positions include arginine 46, asparagine 76, aspartate 110, 135-136 (DF), and methionine 164. The Bin3-type SAM domain occupies 53 to 274 (ELLRQLFPES…KQTIETHPIP (222 aa)).

Belongs to the methyltransferase superfamily. Interacts with DICER1; the interaction may be mediated by RNA.

It localises to the cytoplasm. It catalyses the reaction a 5'-end 5'-phospho-ribonucleoside-RNA + S-adenosyl-L-methionine = a 5'-end (5'-methylphospho)-ribonucleoside-RNA + S-adenosyl-L-homocysteine. It carries out the reaction a 5'-end 5'-phospho-ribonucleoside-RNA + 2 S-adenosyl-L-methionine = a 5'-end (5'-bismethylphospho)-ribonucleoside-RNA + 2 S-adenosyl-L-homocysteine. O-methyltransferase that specifically monomethylates 5'-monophosphate of cytoplasmic histidyl tRNA (tRNA(His)), acting as a capping enzyme by protecting tRNA(His) from cleavage by DICER1. Also able, with less efficiently, to methylate the 5' monophosphate of a subset of pre-miRNAs, acting as a negative regulator of miRNA processing. The 5' monophosphate of pre-miRNAs is recognized by DICER1 and is required for pre-miRNAs processing: methylation at this position reduces the processing of pre-miRNAs by DICER1. Was also reported to mediate dimethylation of pre-miR-145; however dimethylation cannot be reproduced by another group which observes a monomethylation of pre-miR-145. In Homo sapiens (Human), this protein is RNA 5'-monophosphate methyltransferase.